The sequence spans 430 residues: Phosphomethylpyrimidine synthase (430 aa).

Residues N68, M96, Y125, H164, 186-188 (SRG), 227-230 (DALR), and E266 contribute to the substrate site. H270 serves as a coordination point for Zn(2+). Residue Y293 coordinates substrate. A Zn(2+)-binding site is contributed by H334. C410, C413, and C417 together coordinate [4Fe-4S] cluster.

It belongs to the ThiC family. Requires [4Fe-4S] cluster as cofactor.

The enzyme catalyses 5-amino-1-(5-phospho-beta-D-ribosyl)imidazole + S-adenosyl-L-methionine = 4-amino-2-methyl-5-(phosphooxymethyl)pyrimidine + CO + 5'-deoxyadenosine + formate + L-methionine + 3 H(+). It functions in the pathway cofactor biosynthesis; thiamine diphosphate biosynthesis. In terms of biological role, catalyzes the synthesis of the hydroxymethylpyrimidine phosphate (HMP-P) moiety of thiamine from aminoimidazole ribotide (AIR) in a radical S-adenosyl-L-methionine (SAM)-dependent reaction. This chain is Phosphomethylpyrimidine synthase, found in Pyrobaculum aerophilum (strain ATCC 51768 / DSM 7523 / JCM 9630 / CIP 104966 / NBRC 100827 / IM2).